The primary structure comprises 420 residues: Mitogen-activated protein kinase HOG2 (420 aa).

Residues 29-37 and Lys52 contribute to the ATP site; that span reads VGMGAFGLV. The active-site Proton acceptor is Asp144. Thr174 is modified (phosphothreonine). Residues 174–176 carry the TXY motif; that stretch reads TGY. Tyr176 is modified (phosphotyrosine). Residues 372–394 form a disordered region; sequence AQHHHQTQQQSSGKHTNPTTSSS.

It belongs to the protein kinase superfamily. Ser/Thr protein kinase family. MAP kinase subfamily. HOG1 sub-subfamily. Requires Mg(2+) as cofactor. Dually phosphorylated on Thr-174 and Tyr-176, which activates the enzyme.

It localises to the cytoplasm. Its subcellular location is the nucleus. It carries out the reaction L-seryl-[protein] + ATP = O-phospho-L-seryl-[protein] + ADP + H(+). The enzyme catalyses L-threonyl-[protein] + ATP = O-phospho-L-threonyl-[protein] + ADP + H(+). Its activity is regulated as follows. Activated by tyrosine and threonine phosphorylation. In terms of biological role, mitogen-activated protein kinase involved in a signal transduction pathway that is activated by changes in the osmolarity of the extracellular environment. Controls osmotic regulation of transcription of target genes. The polypeptide is Mitogen-activated protein kinase HOG2 (HOG2) (Zygosaccharomyces rouxii).